The chain runs to 282 residues: NAD(P)H-hydrate epimerase (282 aa).

A mitochondrion-targeting transit peptide spans 1–53; that stretch reads MSGLRTLLGLGLLVAGSRLPRIASRQSVCRAGPIWWGTQHRSSETMASAAVKY. The region spanning 59–269 is the YjeF N-terminal domain; sequence AQAVDEELFN…ALEKKYQLNL (211 aa). 113–117 provides a ligand contact to (6S)-NADPHX; sequence NNGGD. Asn114 serves as a coordination point for K(+). Lys138 carries the post-translational modification N6-succinyllysine. Asp179 lines the K(+) pocket. Residues 183-189 and Asp212 contribute to the (6S)-NADPHX site; that span reads GFSFKGD. K(+) is bound at residue Ser215.

This sequence belongs to the NnrE/AIBP family. In terms of assembly, homodimer. Interacts with APOA1 and APOA2. It depends on K(+) as a cofactor. Post-translationally, undergoes physiological phosphorylation during sperm capacitation, downstream to PKA activation.

It is found in the mitochondrion. The protein localises to the secreted. It catalyses the reaction (6R)-NADHX = (6S)-NADHX. It carries out the reaction (6R)-NADPHX = (6S)-NADPHX. Catalyzes the epimerization of the S- and R-forms of NAD(P)HX, a damaged form of NAD(P)H that is a result of enzymatic or heat-dependent hydration. This is a prerequisite for the S-specific NAD(P)H-hydrate dehydratase to allow the repair of both epimers of NAD(P)HX. Accelerates cholesterol efflux from endothelial cells to high-density lipoprotein (HDL) and thereby regulates angiogenesis. This chain is NAD(P)H-hydrate epimerase, found in Rattus norvegicus (Rat).